The primary structure comprises 210 residues: Na(+)-translocating NADH-quinone reductase subunit D (210 aa).

Transmembrane regions (helical) follow at residues 11 to 31 (ILAP…VCSA), 42 to 62 (FVMT…VSLI), 70 to 90 (VRII…DQIL), 103 to 123 (VFVG…AFAM), 131 to 151 (FIDG…VGFF), and 178 to 198 (NGLM…IWAI).

The protein belongs to the NqrDE/RnfAE family. In terms of assembly, composed of six subunits; NqrA, NqrB, NqrC, NqrD, NqrE and NqrF.

The protein localises to the cell inner membrane. It carries out the reaction a ubiquinone + n Na(+)(in) + NADH + H(+) = a ubiquinol + n Na(+)(out) + NAD(+). Functionally, NQR complex catalyzes the reduction of ubiquinone-1 to ubiquinol by two successive reactions, coupled with the transport of Na(+) ions from the cytoplasm to the periplasm. NqrA to NqrE are probably involved in the second step, the conversion of ubisemiquinone to ubiquinol. The sequence is that of Na(+)-translocating NADH-quinone reductase subunit D from Vibrio anguillarum (Listonella anguillarum).